The primary structure comprises 134 residues: Protein LctB (134 aa).

This chain is Protein LctB (lctB), found in Geobacillus stearothermophilus (Bacillus stearothermophilus).